A 397-amino-acid polypeptide reads, in one-letter code: Acetate kinase (397 aa).

Mg(2+) is bound at residue Asn-8. Lys-15 contacts ATP. Position 89 (Arg-89) interacts with substrate. Catalysis depends on Asp-146, which acts as the Proton donor/acceptor. ATP contacts are provided by residues 206 to 210, 281 to 283, and 329 to 333; these read HLGNG, DLR, and GVGEN. A Mg(2+)-binding site is contributed by Glu-382.

Belongs to the acetokinase family. In terms of assembly, homodimer. Requires Mg(2+) as cofactor. It depends on Mn(2+) as a cofactor.

Its subcellular location is the cytoplasm. It carries out the reaction acetate + ATP = acetyl phosphate + ADP. Its pathway is metabolic intermediate biosynthesis; acetyl-CoA biosynthesis; acetyl-CoA from acetate: step 1/2. Its function is as follows. Catalyzes the formation of acetyl phosphate from acetate and ATP. Can also catalyze the reverse reaction. The chain is Acetate kinase from Bacillus thuringiensis subsp. konkukian (strain 97-27).